Here is a 729-residue protein sequence, read N- to C-terminus: Phosphoribosylformylglycinamidine synthase subunit PurL (729 aa).

H54 is an active-site residue. Positions 57 and 96 each coordinate ATP. Position 98 (E98) interacts with Mg(2+). Residues S99–H102 and R121 contribute to the substrate site. Residue H100 is the Proton acceptor of the active site. Mg(2+) is bound at residue D122. Residue Q245 coordinates substrate. D273 provides a ligand contact to Mg(2+). Position 317-319 (E317–Q319) interacts with substrate. Positions 495 and 532 each coordinate ATP. Mg(2+) is bound at residue N533. Residue S535 participates in substrate binding.

This sequence belongs to the FGAMS family. As to quaternary structure, monomer. Part of the FGAM synthase complex composed of 1 PurL, 1 PurQ and 2 PurS subunits.

Its subcellular location is the cytoplasm. It carries out the reaction N(2)-formyl-N(1)-(5-phospho-beta-D-ribosyl)glycinamide + L-glutamine + ATP + H2O = 2-formamido-N(1)-(5-O-phospho-beta-D-ribosyl)acetamidine + L-glutamate + ADP + phosphate + H(+). It functions in the pathway purine metabolism; IMP biosynthesis via de novo pathway; 5-amino-1-(5-phospho-D-ribosyl)imidazole from N(2)-formyl-N(1)-(5-phospho-D-ribosyl)glycinamide: step 1/2. Its function is as follows. Part of the phosphoribosylformylglycinamidine synthase complex involved in the purines biosynthetic pathway. Catalyzes the ATP-dependent conversion of formylglycinamide ribonucleotide (FGAR) and glutamine to yield formylglycinamidine ribonucleotide (FGAM) and glutamate. The FGAM synthase complex is composed of three subunits. PurQ produces an ammonia molecule by converting glutamine to glutamate. PurL transfers the ammonia molecule to FGAR to form FGAM in an ATP-dependent manner. PurS interacts with PurQ and PurL and is thought to assist in the transfer of the ammonia molecule from PurQ to PurL. The polypeptide is Phosphoribosylformylglycinamidine synthase subunit PurL (Staphylococcus epidermidis (strain ATCC 12228 / FDA PCI 1200)).